The sequence spans 261 residues: 3beta-hydroxysteroid dehydrogenase 1 (261 aa).

NAD(+)-binding positions include 65-66 (DV), Asn-92, Tyr-158, and Lys-162. Catalysis depends on Tyr-158, which acts as the Proton acceptor.

This sequence belongs to the short-chain dehydrogenases/reductases (SDR) family.

The catalysed reaction is 3-oxo-5beta-cholan-24-oate + NADH + H(+) = isolithocholate + NAD(+). It catalyses the reaction 12alpha-hydroxy-3-oxo-5beta-cholan-24-oate + NADH + H(+) = isodeoxycholate + NAD(+). It carries out the reaction 7alpha,12alpha-dihydroxy-3-oxo-5beta-cholan-24-oate + NADH + H(+) = isocholate + NAD(+). The enzyme catalyses 3-oxochenodeoxycholate + NADH + H(+) = isochenodeoxycholate + NAD(+). Involved in the modification of secondary bile acids into iso-bile acids (3beta-bile acids) via epimerization of the 3-OH group through a 3-oxo-intermediate. Catalyzes the reduction of 12-alpha-hydroxy-3-oxo-5-beta-cholan-24-oate (3-oxo-DCA) and 3-oxo-5-beta-cholan-24-oate (3-oxo-LCA) to yield isodeoxycholate (isoDCA) and isolithocholate (isoLCA), respectively. Is also able to catalyze the reduction of 3-dehydrocholate (3-oxo-CA or 7alpha,12alpha-dihydroxy-3-oxo-5beta-cholan-24-oate) and 7-alpha-hydroxy-3-oxo-5-beta-cholan-24-oate (3-oxo-CDCA), into isocholate (isoCA) and isochenodeoxycholate (isoCDCA), respectively. Prefers NADH to NADPH as cosubstrate. The conversion of the abundant bile acid deoxycholate (DCA) into isoDCA by the gut bacterium E.lenta favors the growth of the keystone commensal genus Bacteroides, since isoDCA is less cytotoxic than its parent compound, DCA; iso-bile acids have thus a potential role in modulating gut community composition. This is 3beta-hydroxysteroid dehydrogenase 1 from Eggerthella lenta (strain ATCC 25559 / DSM 2243 / CCUG 17323 / JCM 9979 / KCTC 3265 / NCTC 11813 / VPI 0255 / 1899 B) (Eubacterium lentum).